A 588-amino-acid polypeptide reads, in one-letter code: Snake venom 5'-nucleotidase (588 aa).

A signal peptide spans 1 to 40; that stretch reads MQTPKRRRGAQGCPRSSPSPPLLLLVGAVWFCAALSVAAG. Positions 51 and 53 each coordinate Zn(2+). Cysteine 66 and cysteine 71 are oxidised to a cystine. Asparagine 88 is a glycosylation site (N-linked (GlcNAc...) asparagine). Zn(2+) is bound by residues aspartate 99 and asparagine 131. The N-linked (GlcNAc...) asparagine glycan is linked to asparagine 167. Histidine 234 and histidine 257 together coordinate Zn(2+). Residues asparagine 327, asparagine 347, and asparagine 361 are each glycosylated (N-linked (GlcNAc...) asparagine). 2 disulfide bridges follow: cysteine 367/cysteine 372 and cysteine 379/cysteine 401. Arginine 368 provides a ligand contact to AMP. AMP is bound by residues asparagine 404 and arginine 409. Residue asparagine 418 is glycosylated (N-linked (GlcNAc...) asparagine). Position 432 (phenylalanine 432) interacts with AMP. Cysteine 491 and cysteine 494 are oxidised to a cystine. Positions 515 and 521 each coordinate AMP. Asparagine 532 carries an N-linked (GlcNAc...) asparagine glycan. The GPI-anchor amidated serine moiety is linked to residue serine 564. Positions 565–588 are cleaved as a propeptide — removed in mature form; it reads AGTLFQAQLFLTWGLCISLLYFIL.

Belongs to the 5'-nucleotidase family. Requires Zn(2+) as cofactor. In terms of processing, venom 5'-nucleotidases (or a part thereof) may be released into the venom via exosome-like vesicles. They may be attached via a GPI anchor to the membrane of these vesicles. Soluble forms of 5'-nucleotidase might be released by cleavage of the ectodomain in the exosome-like vesicles or venom gland cells. In terms of tissue distribution, expressed by the venom gland.

The protein resides in the membrane. The enzyme catalyses a ribonucleoside 5'-phosphate + H2O = a ribonucleoside + phosphate. Hydrolyzes nucleotides into nucleosides. Snake venom 5'-nucleotidases are widely distributed among venomous snake taxa, but there is a lack of information about their biological activities. They have been shown to inhibit platelet aggregation. This effect may be due to the liberation of inhibitory AMP or adenosine by its action on ADP released upon initiation of aggregation. Venom 5'-nucleotidases are also known to synergistically act in vivo with other toxins like ADPases, phospholipases, and disintegrins to exert a more pronounced anti-coagulant effect. This Gloydius brevicauda (Korean slamosa snake) protein is Snake venom 5'-nucleotidase.